The sequence spans 208 residues: MKIVEVKHPLVKHKLGLMREHDISTKRFRELASEVGSLLTYEATADLATEKVTIEGWNGPVEVEQIKGKKITVVPILRAGLGMMEGVLEHVPSARISVVGIYRNEETLEPVPYFQKLVSNIDERMALVVDPMLATGGSMIATIDLLKNAGCTSIKVLVLVAAPEGIAALEKAHPDVELYTASVDKGLNEHGYIIPGLGDAGDKIFGTK.

Residues arginine 78, arginine 103, and 130–138 each bind 5-phospho-alpha-D-ribose 1-diphosphate; that span reads DPMLATGGS. Residues isoleucine 193 and 198–200 each bind uracil; that span reads GDA. Aspartate 199 contributes to the 5-phospho-alpha-D-ribose 1-diphosphate binding site.

It belongs to the UPRTase family. It depends on Mg(2+) as a cofactor.

The catalysed reaction is UMP + diphosphate = 5-phospho-alpha-D-ribose 1-diphosphate + uracil. It functions in the pathway pyrimidine metabolism; UMP biosynthesis via salvage pathway; UMP from uracil: step 1/1. Allosterically activated by GTP. Catalyzes the conversion of uracil and 5-phospho-alpha-D-ribose 1-diphosphate (PRPP) to UMP and diphosphate. In Klebsiella pneumoniae (strain 342), this protein is Uracil phosphoribosyltransferase.